We begin with the raw amino-acid sequence, 596 residues long: Phosphoenolpyruvate carboxykinase [GTP] (596 aa).

Substrate-binding positions include Arg77 and 205-207 (YGG). Mn(2+)-binding residues include Lys214 and His234. A substrate-binding site is contributed by Ser256. Residue 257–262 (ACGKTN) coordinates GTP. The active site involves Cys258. Asp283 is a Mn(2+) binding site. The interval 362-388 (KKGSTEKAAHPNSRFTAPAKNNPAISP) is disordered. 373–375 (NSR) contributes to the substrate binding site. GTP-binding positions include Arg375, Arg406, and 499-502 (YGDN).

This sequence belongs to the phosphoenolpyruvate carboxykinase [GTP] family. As to quaternary structure, monomer. Requires Mn(2+) as cofactor.

Its subcellular location is the cytoplasm. It catalyses the reaction oxaloacetate + GTP = phosphoenolpyruvate + GDP + CO2. Its pathway is carbohydrate biosynthesis; gluconeogenesis. Functionally, catalyzes the conversion of oxaloacetate (OAA) to phosphoenolpyruvate (PEP), the rate-limiting step in the metabolic pathway that produces glucose from lactate and other precursors derived from the citric acid cycle. This is Phosphoenolpyruvate carboxykinase [GTP] from Anaeromyxobacter dehalogenans (strain 2CP-1 / ATCC BAA-258).